Reading from the N-terminus, the 350-residue chain is Biotin synthase (350 aa).

Residues 38 to 257 (NKVQVSTLLS…AVARIIMPMS (220 aa)) form the Radical SAM core domain. Residues cysteine 53, cysteine 57, and cysteine 60 each coordinate [4Fe-4S] cluster. [2Fe-2S] cluster-binding residues include cysteine 97, cysteine 128, cysteine 188, and arginine 260.

It belongs to the radical SAM superfamily. Biotin synthase family. As to quaternary structure, homodimer. Requires [4Fe-4S] cluster as cofactor. The cofactor is [2Fe-2S] cluster.

It carries out the reaction (4R,5S)-dethiobiotin + (sulfur carrier)-SH + 2 reduced [2Fe-2S]-[ferredoxin] + 2 S-adenosyl-L-methionine = (sulfur carrier)-H + biotin + 2 5'-deoxyadenosine + 2 L-methionine + 2 oxidized [2Fe-2S]-[ferredoxin]. Its pathway is cofactor biosynthesis; biotin biosynthesis; biotin from 7,8-diaminononanoate: step 2/2. Catalyzes the conversion of dethiobiotin (DTB) to biotin by the insertion of a sulfur atom into dethiobiotin via a radical-based mechanism. This is Biotin synthase from Photobacterium profundum (strain SS9).